A 546-amino-acid chain; its full sequence is Choline/ethanolamine transporter FLVCR2 (546 aa).

The tract at residues 1–84 (MVNESLNQEE…TLAQPSGLTH (84 aa)) is disordered. Over 1–93 (MVNESLNQEE…HPNELVKEDS (93 aa)) the chain is Cytoplasmic. Residues 22–49 (QADTSYSTQPSVSIHPSVSGHPSVSIHP) are compositionally biased toward polar residues. 7 repeat units span residues 31–36 (PSVSIH), 37–42 (PSVSGH), 43–48 (PSVSIH), 49–54 (PSVSGH), 55–60 (PSVSID), 61–66 (PSVSVH), and 67–72 (PSSSAH). Residues 31–84 (PSVSIHPSVSGHPSVSIHPSVSGHPSVSIDPSVSVHPSSSAHPSTLAQPSGLTH) form a 9 X 6 AA tandem repeats of P-S-[VS]-S-[VIAG]-[HD] region. Low complexity predominate over residues 54–74 (HPSVSIDPSVSVHPSSSAHPS). An 8; approximate repeat occupies 73 to 78 (PSTLAQ). One copy of the 9; approximate repeat lies at 79-84 (PSGLTH). Residues 94–118 (VIKVSKRRWAVVLVFSCYSLCNAFQ) traverse the membrane as a helical segment. Residues Asn115, Ala116, and Trp119 each contribute to the choline site. Topologically, residues 119–136 (WIQYGSINNIFMNFYGVS) are extracellular. Residues 137-164 (AFAIDWLSMCYMLTYIPLLLPVAWMLEK) form a helical membrane-spanning segment. Residues 165–166 (FG) are Cytoplasmic-facing. A helical membrane pass occupies residues 167–186 (LRTIAITGSALNCLGAWVKL). The Extracellular segment spans residues 187-193 (GSLEPHL). Residues 194–222 (FPVTMVGQVICSVAQVFILGMPSRIASVW) form a helical membrane-spanning segment. Leu212 provides a ligand contact to choline. At 223-227 (FGANE) the chain is on the cytoplasmic side. The chain crosses the membrane as a helical span at residues 228 to 253 (VSTACSMAVFGNQLGIAIGFLVPPVL). The Extracellular portion of the chain corresponds to 254-258 (VPNIK). Residues 259–288 (DQEKLAYHISIMFYIIGGVATLLFILVIIV) form a helical membrane-spanning segment. The Cytoplasmic segment spans residues 289–324 (FKEKPKYPPSRAQSLSYALATTDASYLSSIVRLFKN). A helical transmembrane segment spans residues 325 to 355 (LNFVLLVITYGLNAGAFYALSTLLNRMVIMH). Tyr342 lines the choline pocket. Over 356 to 359 (FPGQ) the chain is Extracellular. A helical membrane pass occupies residues 360-388 (EVNAGRIGLTIVIAGMFGAMISGIWLDKS). Over 389–390 (KT) the chain is Cytoplasmic. A helical membrane pass occupies residues 391-413 (YKETTLVVYIMTLVGMVVYTFTL). The Extracellular segment spans residues 414-416 (NLN). The chain crosses the membrane as a helical span at residues 417 to 446 (HLWIVFITADSLGFFMTGYLPLGFEFAVEL). Residues 447–454 (TYPESEGV) are Cytoplasmic-facing. The chain crosses the membrane as a helical span at residues 455 to 480 (SSGLLNVSAQVFGIIFTISQGQIIDN). Position 464 (Gln464) interacts with choline. Residues 481–482 (YG) lie on the Extracellular side of the membrane. A helical transmembrane segment spans residues 483–505 (SVPGNIFLCVFLALGSALTAFIK). Residues 506 to 546 (SDLRRQRANKDAPETKVQEEEEEEEESNTSKVPTVLSEAHL) lie on the Cytoplasmic side of the membrane. The span at 511-523 (QRANKDAPETKVQ) shows a compositional bias: basic and acidic residues. Positions 511–546 (QRANKDAPETKVQEEEEEEEESNTSKVPTVLSEAHL) are disordered. Position 535 is a phosphoserine (Ser535).

Belongs to the major facilitator superfamily. Feline leukemia virus subgroup C receptor (TC 2.A.1.28.1) family. In terms of assembly, interacts with components of electron transfer chain complexes III, IV and V including CYC1, NDUFA4, COX4I1, ATP5PD and ATP5F1C; these interactions occur in the absence of heme and are disrupted upon heme binding. Interacts with ATP2A2; this interaction occurs in the absence of heme and promotes ATP2A2 proteasomal degradation; the complex is dissociated upon heme binding. Interacts with HMOX1; this interaction is potentiated in the presence of heme.

Its subcellular location is the cell membrane. The protein resides in the mitochondrion membrane. It is found in the endoplasmic reticulum membrane. The catalysed reaction is choline(out) = choline(in). It catalyses the reaction ethanolamine(in) = ethanolamine(out). It carries out the reaction heme b(in) = heme b(out). In terms of biological role, choline uniporter that specifically mediates choline uptake at the blood-brain-barrier. Responsible for the majority of choline uptake across the blood-brain-barrier from the circulation into the brain. Choline, a nutrient critical for brain development, is a precursor of phosphatidylcholine, as well as betaine. Also mediates transport of ethanolamine. Choline and ethanolamine transport is not coupled with proton transport and is exclusively driven by the choline gradient across the plasma membrane. However, the presence of an inwardly directed proton gradient enhances choline uptake. Also acts as a heme b transporter. Required to regulate mitochondrial respiration processes, ATP synthesis and thermogenesis. At low heme levels, interacts with components of electron transfer chain (ETC) complexes and ATP2A2, leading to ubiquitin-mediated degradation of ATP2A2 and inhibition of thermogenesis. Upon heme binding, dissociates from ETC complexes to allow switching from mitochondrial ATP synthesis to thermogenesis. The chain is Choline/ethanolamine transporter FLVCR2 (Flvcr2) from Rattus norvegicus (Rat).